A 919-amino-acid chain; its full sequence is MTQEINKNYNPKEIEQANYQNWEASGKFACGNTDSKDTYTIMLPPPNVTGTLHMGHGFQMSLMDILIRYNRMSGKDTLWQPGTDHAGIATQMVVERQLNAQGISRHDLGRENFVSKVWEWKELSGGTITSQMRRIGASPDWDRERFTMDKGLSDAVKKCFIKLYEDGLAYRGERLVNWDPKLKTAVSDLEVAQVDKQGSLWHFIYPVADSDEKIIIATTRPETMLGDMAVAVHPEDERYTHLVGKMINLPLTDRQIPIIADDYVEKDFGTGCVKITPAHDFNDYEMGKRHNLPMLNILTDDATLNTNVPSKYQGLDRFEARKQVVADMEALGLLDKIEPHALKVPTGDRTGEILEPYLTKQWFVKADVLAKPAIEAVEKGDVRFVPDNWKNTYFAWMRDIQDWCVSRQLWWGHRIPAWYDEAGNAYVGEDEADVRAKYNLADDIAIKQDEDVFDTWFSSALWPFSTLGWPEQTPELAKYYPTSVLVTGFDIIFFWVARMMMFGMYFMNDVPFRDIYITGLIRDSEGQKMSKSKGNVLDPVDLIDGISLDELLKKRTTGLMQPQMKAKIEKATKKEFPEGISAYGADAVRFTYAALASTSRDISFDTARVEGYRNFCNKLWNASRFVMMNLDDYKVCDNYELGVADKWIWSVLNTATADVHRHLANYRFDLVTNTIYDLVWNNYCDWYVEFAKVALKDDSLSEQQKNGVKYTLTKVLENILALAHPLIPFITESIYQQLKAHLNDAKDTIMDVSYPVATQALEAPEAEKAIVWLQNVVTTLRNMRSEVGIKPSLEISLIVKDVADKDREYLAQTEGFIKALARINNIEFNDNPPTSLSQIVEGLELNIPLAGLVDIEAEKARLDKELDKLKDEVDRVQKKLSNERFVSNAPEAVVAAEQEKLAKYQELYAKTLEKKEALG.

The short motif at 46 to 56 is the 'HIGH' region element; the sequence is PNVTGTLHMGH. The 'KMSKS' region signature appears at 528–532; that stretch reads KMSKS. Lys531 lines the ATP pocket. A coiled-coil region spans residues 849–919; it reads LAGLVDIEAE…KTLEKKEALG (71 aa).

It belongs to the class-I aminoacyl-tRNA synthetase family. ValS type 1 subfamily. In terms of assembly, monomer.

The protein resides in the cytoplasm. It carries out the reaction tRNA(Val) + L-valine + ATP = L-valyl-tRNA(Val) + AMP + diphosphate. Its function is as follows. Catalyzes the attachment of valine to tRNA(Val). As ValRS can inadvertently accommodate and process structurally similar amino acids such as threonine, to avoid such errors, it has a 'posttransfer' editing activity that hydrolyzes mischarged Thr-tRNA(Val) in a tRNA-dependent manner. This Francisella tularensis subsp. tularensis (strain SCHU S4 / Schu 4) protein is Valine--tRNA ligase.